Consider the following 329-residue polypeptide: MSSAQRVVITPGEPAGIGPDLVVQLAQRAWPIELVVCADGPLLTERAAMLGLPLSLLPYSPDVPAAPQPAGTLTLLPVSLRAPAIPGQLTVENGPYVVETLARACDGCLQHEFAALITGPVHKGVINDAGIPFTGHTEFFEERSQAKKVVMMLATEALRVALATTHLPLRAIADAITPALLHDVIAILHHDLRTKFGLRNPHILVCGLNPHAGEGGHMGTEEIDTIIPVLDELRAQGMHLTGPLPADTLFQPKYLDHADAVLAMYHDQGLPVLKYQGFGRGVNITLGLPFIRTSVDHGTALELAGQGKADVGSFITALNLAIKMIVNTQ.

Substrate-binding residues include H136 and T137. 3 residues coordinate a divalent metal cation: H166, H211, and H266. Substrate is bound by residues K274, N283, and R292.

This sequence belongs to the PdxA family. As to quaternary structure, homodimer. The cofactor is Zn(2+). Mg(2+) serves as cofactor. Co(2+) is required as a cofactor.

Its subcellular location is the cytoplasm. The catalysed reaction is 4-(phosphooxy)-L-threonine + NAD(+) = 3-amino-2-oxopropyl phosphate + CO2 + NADH. It functions in the pathway cofactor biosynthesis; pyridoxine 5'-phosphate biosynthesis; pyridoxine 5'-phosphate from D-erythrose 4-phosphate: step 4/5. In terms of biological role, catalyzes the NAD(P)-dependent oxidation of 4-(phosphooxy)-L-threonine (HTP) into 2-amino-3-oxo-4-(phosphooxy)butyric acid which spontaneously decarboxylates to form 3-amino-2-oxopropyl phosphate (AHAP). This is 4-hydroxythreonine-4-phosphate dehydrogenase from Salmonella arizonae (strain ATCC BAA-731 / CDC346-86 / RSK2980).